The primary structure comprises 156 residues: Small ribosomal subunit protein uS7 (156 aa).

The protein belongs to the universal ribosomal protein uS7 family. Part of the 30S ribosomal subunit. Contacts proteins S9 and S11.

One of the primary rRNA binding proteins, it binds directly to 16S rRNA where it nucleates assembly of the head domain of the 30S subunit. Is located at the subunit interface close to the decoding center, probably blocks exit of the E-site tRNA. The protein is Small ribosomal subunit protein uS7 of Rhizobium leguminosarum bv. trifolii (strain WSM2304).